Here is a 194-residue protein sequence, read N- to C-terminus: Metalloproteinase inhibitor 2 (194 aa).

A Zn(2+)-binding site is contributed by C1. Involved in metalloproteinase-binding stretches follow at residues 1-4 (CSCS) and 69-70 (SA). Intrachain disulfides connect C1/C72, C3/C101, C13/C126, C128/C175, C133/C138, and C146/C167. Residues 1–126 (CSCSPVHPQQ…SLNHRYQMGC (126 aa)) enclose the NTR domain.

This sequence belongs to the protease inhibitor I35 (TIMP) family. In terms of assembly, interacts (via the C-terminal) with MMP2 (via the C-terminal PEX domain); the interaction inhibits the MMP2 activity. The activity of TIMP2 is dependent on the presence of disulfide bonds.

The protein localises to the secreted. Functionally, complexes with metalloproteinases (such as collagenases) and irreversibly inactivates them by binding to their catalytic zinc cofactor. The protein is Metalloproteinase inhibitor 2 (TIMP2) of Oryctolagus cuniculus (Rabbit).